Here is a 558-residue protein sequence, read N- to C-terminus: Delta-1-pyrroline-5-carboxylate dehydrogenase, mitochondrial (558 aa).

NAD(+) contacts are provided by residues Ser-198, Lys-223, and 276 to 280 (GSTGV). Glu-306 acts as the Proton acceptor in catalysis. Cys-340 functions as the Nucleophile in the catalytic mechanism. Residue Glu-438 coordinates NAD(+).

It belongs to the aldehyde dehydrogenase family.

It localises to the mitochondrion matrix. The catalysed reaction is L-glutamate 5-semialdehyde + NAD(+) + H2O = L-glutamate + NADH + 2 H(+). It participates in amino-acid degradation; L-proline degradation into L-glutamate; L-glutamate from L-proline: step 2/2. Irreversible conversion of delta-1-pyrroline-5-carboxylate (P5C), derived either from proline or ornithine, to glutamate. This is a necessary step in the pathway interconnecting the urea and tricarboxylic acid cycles. The protein is Delta-1-pyrroline-5-carboxylate dehydrogenase, mitochondrial of Dictyostelium discoideum (Social amoeba).